The following is a 556-amino-acid chain: Single-strand DNA-binding protein (556 aa).

2 disordered regions span residues 1-95 (MDPK…SEVE) and 527-556 (FVRPEPALPPISDSRRTYESRPRGPTVNSL). 2 stretches are compositionally biased toward polar residues: residues 10-25 (ENITETAAGNVETSDF) and 36-51 (VNSTGMSEIDMTGSQE). Composition is skewed to basic and acidic residues over residues 52 to 73 (TPEHNMHGSPTHTDDLGPRLDA) and 539 to 548 (DSRRTYESRP).

In terms of assembly, interacts with host VIP2 that promotes T-DNA integration into the host genome. Forms a complex made of virE2 and host proteins VIP1 and VBF. Forms heterodimers with the chaperone protein virE1 that prevent virE2 anarchic homopolymerization. Interacts with A.thaliana VIP1 that mediates its translocation to the host nucleus. Forms a complex made of VirE2, host VIP1 and VIP2 and single-stranded DNA (ssDNA).

The protein resides in the secreted. It is found in the host nucleus. Involved in DNA transformation; mediates the nuclear uptake of single-stranded DNA copies of the transferred DNA (T-DNA) element. Binds single-stranded but not double-stranded DNA regardless of nucleotide sequence composition. This chain is Single-strand DNA-binding protein (virE2), found in Agrobacterium fabrum (strain C58 / ATCC 33970) (Agrobacterium tumefaciens (strain C58)).